A 423-amino-acid chain; its full sequence is Glycine amidinotransferase, mitochondrial (423 aa).

The transit peptide at 1-48 (MLRVRCLRGGSRGAEAVHYIGSRLGRTLTGWVQRTFQSTQAATASSRN) directs the protein to the mitochondrion. Residues 39–51 (TQAATASSRNSSA) show a composition bias toward low complexity. The tract at residues 39–65 (TQAATASSRNSSAADDKATEPLPKDCP) is disordered. 2 positions are modified to phosphoserine: S46 and S49. Basic and acidic residues predominate over residues 52 to 61 (ADDKATEPLP). D170 lines the arginine pocket. Catalysis depends on residues D254 and H303. Arginine-binding residues include D305, R322, S354, and S355. N6-acetyllysine is present on K385. C407 functions as the Amidino-cysteine intermediate in the catalytic mechanism.

This sequence belongs to the amidinotransferase family. Homodimer.

Its subcellular location is the mitochondrion inner membrane. The enzyme catalyses L-arginine + glycine = guanidinoacetate + L-ornithine. The catalysed reaction is 4-aminobutanoate + L-arginine = 4-guanidinobutanoate + L-ornithine. It catalyses the reaction beta-alanine + L-arginine = 3-guanidinopropanoate + L-ornithine. It carries out the reaction taurine + L-arginine = taurocyamine + L-ornithine. It participates in amine and polyamine biosynthesis; creatine biosynthesis; creatine from L-arginine and glycine: step 1/2. Its function is as follows. Transamidinase that catalyzes the transfer of the amidino group of L-arginine onto the amino moiety of acceptor metabolites such as glycine, beta-alanine, gamma-aminobutyric acid (GABA) and taurine yielding the corresponding guanidine derivatives. Catalyzes the rate-limiting step of creatine biosynthesis, namely the transfer of the amidino group from L-arginine to glycine to generate guanidinoacetate, which is then methylated by GAMT to form creatine. Provides creatine as a source for ATP generation in tissues with high energy demands, in particular skeletal muscle, heart and brain. This chain is Glycine amidinotransferase, mitochondrial (GATM), found in Pongo abelii (Sumatran orangutan).